A 644-amino-acid chain; its full sequence is Threonine--tRNA ligase (644 aa).

One can recognise a TGS domain in the interval 1–61 (MNVTIEGQVF…ADTTTIEPVF (61 aa)). A catalytic region spans residues 241–532 (DHRKLGQQLD…LTEHFAGAFP (292 aa)). 3 residues coordinate Zn(2+): C333, H384, and H509.

It belongs to the class-II aminoacyl-tRNA synthetase family. In terms of assembly, homodimer. Zn(2+) is required as a cofactor.

It is found in the cytoplasm. It catalyses the reaction tRNA(Thr) + L-threonine + ATP = L-threonyl-tRNA(Thr) + AMP + diphosphate + H(+). In terms of biological role, catalyzes the attachment of threonine to tRNA(Thr) in a two-step reaction: L-threonine is first activated by ATP to form Thr-AMP and then transferred to the acceptor end of tRNA(Thr). Also edits incorrectly charged L-seryl-tRNA(Thr). The sequence is that of Threonine--tRNA ligase from Nitratidesulfovibrio vulgaris (strain DSM 19637 / Miyazaki F) (Desulfovibrio vulgaris).